The chain runs to 416 residues: CC-adding tRNA nucleotidyltransferase (416 aa).

31–34 (GAVR) provides a ligand contact to CTP. Residues aspartate 46 and aspartate 48 each contribute to the Mg(2+) site. Residues 106-107 (RD), asparagine 111, 148-157 (DPLRLLRAYR), and arginine 188 contribute to the CTP site.

This sequence belongs to the tRNA nucleotidyltransferase/poly(A) polymerase family. Mg(2+) serves as cofactor.

The enzyme catalyses a tRNA precursor + 2 CTP = a tRNA with a 3' CC end + 2 diphosphate. TRNA nucleotidyltransferase involved in the synthesis of the tRNA CCA terminus. Adds the two cytidine residues to tRNA. This is CC-adding tRNA nucleotidyltransferase from Synechocystis sp. (strain ATCC 27184 / PCC 6803 / Kazusa).